The primary structure comprises 81 residues: Alpha-toxin Ac1 (81 aa).

An N-terminal signal peptide occupies residues 1-17 (YIVMISLALVVMIGVES). The 62-residue stretch at 19–80 (RDGYIVYPNN…PIKDPSQKCT (62 aa)) folds into the LCN-type CS-alpha/beta domain. Intrachain disulfides connect Cys29–Cys79, Cys33–Cys51, Cys37–Cys61, and Cys41–Cys63.

The protein belongs to the long (4 C-C) scorpion toxin superfamily. Sodium channel inhibitor family. Alpha subfamily. As to expression, expressed by the venom gland.

The protein resides in the secreted. In terms of biological role, alpha toxins bind voltage-independently at site-3 of sodium channels (Nav) and inhibit the inactivation of the activated channels, thereby blocking neuronal transmission. This Androctonus crassicauda (Arabian fat-tailed scorpion) protein is Alpha-toxin Ac1.